The chain runs to 549 residues: Cation/acetate symporter ActP (549 aa).

Transmembrane regions (helical) follow at residues Trp33–Ala53, Leu77–Phe97, Gly103–Glu123, Ile148–Gly168, Ile183–Ala203, Trp206–Val226, Ile262–Leu282, Gly303–Val323, Leu355–Leu375, Val404–Glu424, Ile428–Leu448, Gly464–Val484, and Ile493–Phe513.

This sequence belongs to the sodium:solute symporter (SSF) (TC 2.A.21) family.

The protein resides in the cell inner membrane. Its function is as follows. Transports acetate. The polypeptide is Cation/acetate symporter ActP (Salmonella newport (strain SL254)).